The chain runs to 344 residues: Ferrochelatase (344 aa).

The Fe cation site is built by H214 and E295.

The protein belongs to the ferrochelatase family.

Its subcellular location is the cytoplasm. It carries out the reaction heme b + 2 H(+) = protoporphyrin IX + Fe(2+). Its pathway is porphyrin-containing compound metabolism; protoheme biosynthesis; protoheme from protoporphyrin-IX: step 1/1. Functionally, catalyzes the ferrous insertion into protoporphyrin IX. The sequence is that of Ferrochelatase from Agrobacterium fabrum (strain C58 / ATCC 33970) (Agrobacterium tumefaciens (strain C58)).